The primary structure comprises 340 residues: 4-hydroxy-2-oxovalerate aldolase (340 aa).

A Pyruvate carboxyltransferase domain is found at 8–260 (VILHDMSLRD…SHGINLYDIM (253 aa)). Residue 16 to 17 (RD) participates in substrate binding. Asp-17 lines the Mn(2+) pocket. His-20 serves as the catalytic Proton acceptor. The substrate site is built by Ser-170 and His-199. Mn(2+) is bound by residues His-199 and His-201. Tyr-290 contributes to the substrate binding site.

It belongs to the 4-hydroxy-2-oxovalerate aldolase family.

The catalysed reaction is (S)-4-hydroxy-2-oxopentanoate = acetaldehyde + pyruvate. The polypeptide is 4-hydroxy-2-oxovalerate aldolase (Shewanella pealeana (strain ATCC 700345 / ANG-SQ1)).